The following is a 435-amino-acid chain: Probable glycine dehydrogenase (decarboxylating) subunit 1 (435 aa).

The protein belongs to the GcvP family. N-terminal subunit subfamily. In terms of assembly, the glycine cleavage system is composed of four proteins: P, T, L and H. In this organism, the P 'protein' is a heterodimer of two subunits.

It carries out the reaction N(6)-[(R)-lipoyl]-L-lysyl-[glycine-cleavage complex H protein] + glycine + H(+) = N(6)-[(R)-S(8)-aminomethyldihydrolipoyl]-L-lysyl-[glycine-cleavage complex H protein] + CO2. The glycine cleavage system catalyzes the degradation of glycine. The P protein binds the alpha-amino group of glycine through its pyridoxal phosphate cofactor; CO(2) is released and the remaining methylamine moiety is then transferred to the lipoamide cofactor of the H protein. This Coprothermobacter proteolyticus (strain ATCC 35245 / DSM 5265 / OCM 4 / BT) protein is Probable glycine dehydrogenase (decarboxylating) subunit 1.